Consider the following 1692-residue polypeptide: Adenylate cyclase (1692 aa).

Disordered stretches follow at residues 1–22 (MDQS…FKTG) and 103–142 (SLSD…YKEN). Residues 120–132 (ESSEKSEVPRDTR) show a composition bias toward basic and acidic residues. Positions 174–195 (FTNLTFPEPISDDSDSVEFQRD) are required for interaction with gpa2. One can recognise a Ras-associating domain in the interval 292 to 380 (KEFFLRVYRD…SDEEINEEDN (89 aa)). LRR repeat units follow at residues 430-450 (ELIS…DFME), 454-474 (KLKR…PITA), 477-498 (QLEV…IFSG), 503-524 (SLKE…TRYL), 526-547 (NLTY…ITEL), 549-570 (QLET…IGSL), 572-594 (KLKH…IGLL), 596-617 (NLET…SECP), 618-639 (KLNS…NPSA), 660-681 (NLVY…VIET), 684-705 (NVET…ISAM), 707-729 (NLKY…GKLK), 730-751 (HLVH…VWQV), 753-774 (SLKV…VATS), 783-805 (QLKI…EFVM), 807-827 (TVEE…TALE), 831-852 (CLKV…FFQN), 855-876 (DLKH…STAQ), 878-899 (LLET…EALS), 901-922 (SLRF…KAEK), and 930-951 (QLEY…EDTN). The PPM-type phosphatase domain maps to 995 to 1275 (RYGVCGYLSR…KNVLVVIVEL (281 aa)). Residues 1332–1469 (AMVFTDIKNS…PVVNRTSRVV (138 aa)) enclose the Guanylate cyclase domain. 2 residues coordinate Mg(2+): D1337 and D1380. Residues D1337 and D1380 each coordinate Mn(2+). A compositionally biased stretch (basic and acidic residues) spans 1585 to 1597 (SDSKSVHGEEGGS). Residues 1585–1614 (SDSKSVHGEEGGSGKRSVSSLRNVSPSEST) are disordered. The span at 1600–1614 (RSVSSLRNVSPSEST) shows a compositional bias: polar residues.

This sequence belongs to the adenylyl cyclase class-3 family. As to quaternary structure, interacts (via N-terminus) with gpa2; the interaction is direct and serves to activate adenylate cyclase and cAMP-PKA signaling, to repress sexual development and gluconeogenesis. Interacts with git1. The cofactor is Mn(2+).

Its subcellular location is the cytoplasm. It catalyses the reaction ATP = 3',5'-cyclic AMP + diphosphate. Activated by binding G protein gpa2. Activated by git1. In contrast to yeast cyclase, S.pombe cyclase is not likely to be regulated by RAS proteins. In terms of biological role, acts in glucose-induced cAMP signaling by catalyzing the synthesis of the second messenger, cAMP to activate PKA signaling and repress sexual development and gluconeogenesis. The chain is Adenylate cyclase from Schizosaccharomyces pombe (strain 972 / ATCC 24843) (Fission yeast).